The chain runs to 98 residues: NADH-ubiquinone oxidoreductase chain 4L (98 aa).

A run of 3 helical transmembrane segments spans residues 1 to 21 (MSLT…GLLM), 29 to 49 (SLLC…MVIL), and 61 to 81 (IILL…LVMV).

Belongs to the complex I subunit 4L family. In terms of assembly, core subunit of respiratory chain NADH dehydrogenase (Complex I) which is composed of 45 different subunits.

Its subcellular location is the mitochondrion inner membrane. It carries out the reaction a ubiquinone + NADH + 5 H(+)(in) = a ubiquinol + NAD(+) + 4 H(+)(out). Core subunit of the mitochondrial membrane respiratory chain NADH dehydrogenase (Complex I) which catalyzes electron transfer from NADH through the respiratory chain, using ubiquinone as an electron acceptor. Part of the enzyme membrane arm which is embedded in the lipid bilayer and involved in proton translocation. The polypeptide is NADH-ubiquinone oxidoreductase chain 4L (MT-ND4L) (Vampyressa thyone (Northern little yellow-eared bat)).